The sequence spans 444 residues: Tol-Pal system protein TolB (444 aa).

The first 26 residues, 1 to 26 (MNLFRSLAPMGLALALLLPAAAPALA), serve as a signal peptide directing secretion. The span at 287-310 (ASGTRRQLTNSPSIETAPSYSPDG) shows a compositional bias: polar residues. The tract at residues 287 to 311 (ASGTRRQLTNSPSIETAPSYSPDGS) is disordered.

Belongs to the TolB family. The Tol-Pal system is composed of five core proteins: the inner membrane proteins TolA, TolQ and TolR, the periplasmic protein TolB and the outer membrane protein Pal. They form a network linking the inner and outer membranes and the peptidoglycan layer.

Its subcellular location is the periplasm. In terms of biological role, part of the Tol-Pal system, which plays a role in outer membrane invagination during cell division and is important for maintaining outer membrane integrity. This is Tol-Pal system protein TolB from Cereibacter sphaeroides (strain ATCC 17025 / ATH 2.4.3) (Rhodobacter sphaeroides).